The chain runs to 198 residues: MVPFVLASASPARRQLLQQIGIDPIIQPSHFDESVIQAATPTELVRLLARCKAETVAQSYSAPALILGCDSVLVLGGEIYGKPASPEMAIARWQQMRGQTADLLTGHALIDLAQGRTCVEVESTQVVFAQVSDAEIAAYVASGEPLACAGCFALDGQGGAFVEKIVGTPSNVIGLSLPLLRRLLLSLGYTLADVQNKK.

Catalysis depends on aspartate 70, which acts as the Proton acceptor.

It belongs to the Maf family. The cofactor is a divalent metal cation.

It is found in the cytoplasm. The catalysed reaction is a ribonucleoside 5'-triphosphate + H2O = a ribonucleoside 5'-phosphate + diphosphate + H(+). It catalyses the reaction a 2'-deoxyribonucleoside 5'-triphosphate + H2O = a 2'-deoxyribonucleoside 5'-phosphate + diphosphate + H(+). Nucleoside triphosphate pyrophosphatase. May have a dual role in cell division arrest and in preventing the incorporation of modified nucleotides into cellular nucleic acids. This chain is Nucleoside triphosphate pyrophosphatase, found in Thermosynechococcus vestitus (strain NIES-2133 / IAM M-273 / BP-1).